Here is a 189-residue protein sequence, read N- to C-terminus: Tumor protein p53-inducible protein 11 (189 aa).

Topologically, residues 1–63 are cytoplasmic; it reads MAGKQPPPLM…FAVREPLGLR (63 aa). A Phosphoserine modification is found at Ser14. A helical transmembrane segment spans residues 64–84; that stretch reads VWQFLSAMLFSSVAIMALALP. At 85–108 the chain is on the extracellular side; the sequence is DQLYDAVFDGAEVTSKTPIRLYGG. The chain crosses the membrane as a helical span at residues 109–129; sequence ALLSISLIMWNALYTAEKVII. Position 130 (Arg130) is a topological domain, cytoplasmic. Residues 131–151 traverse the membrane as a helical segment; sequence WTLLTEACYFGVQSLVVTATL. The Extracellular segment spans residues 152-155; sequence AETG. Residues 156-176 traverse the membrane as a helical segment; sequence LMSLGTVLLLASRLLFVIVSI. Over 177-189 the chain is Cytoplasmic; it reads YYYYQVGRKPKKV.

It localises to the membrane. This is Tumor protein p53-inducible protein 11 (Trp53i11) from Mus musculus (Mouse).